Here is a 1020-residue protein sequence, read N- to C-terminus: Protein translocase subunit SecA (1020 aa).

ATP contacts are provided by residues Gln99, 117–121 (GEGKT), and Asp633. The interval 963–992 (NEQPSQEMAADEETQEESKIEENKPEPIVV) is disordered. Residues 978–987 (EESKIEENKP) show a composition bias toward basic and acidic residues. Residues Cys1002, Cys1004, Cys1013, and Cys1014 each contribute to the Zn(2+) site.

The protein belongs to the SecA family. In terms of assembly, monomer and homodimer. Part of the essential Sec protein translocation apparatus which comprises SecA, SecYEG and auxiliary proteins SecDF. Other proteins may also be involved. Requires Zn(2+) as cofactor.

It localises to the cell inner membrane. It is found in the cytoplasm. The catalysed reaction is ATP + H2O + cellular proteinSide 1 = ADP + phosphate + cellular proteinSide 2.. Functionally, part of the Sec protein translocase complex. Interacts with the SecYEG preprotein conducting channel. Has a central role in coupling the hydrolysis of ATP to the transfer of proteins into and across the cell membrane, serving as an ATP-driven molecular motor driving the stepwise translocation of polypeptide chains across the membrane. In Protochlamydia amoebophila (strain UWE25), this protein is Protein translocase subunit SecA.